The primary structure comprises 1985 residues: Non-reducing polyketide synthase ntnG (1985 aa).

The segment at 7–243 (LLFGDQADAP…TILPAFGAVH (237 aa)) is N-terminal acylcarrier protein transacylase (SAT) domain. Residues 364–792 (SGSVAIIGMS…GGNSCFVLEE (429 aa)) enclose the Ketosynthase family 3 (KS3) domain. Catalysis depends on for beta-ketoacyl synthase activity residues C536, H671, and H711. The interval 889–1148 (VFAFTGQGAH…VNFEQAISHC (260 aa)) is malonyl-CoA:ACP transacylase (MAT) domain. Catalysis depends on S980, which acts as the For acyl/malonyl transferase activity. Residues 1261-1392 (HRLVKQEDTA…VRLRDEHAFD (132 aa)) are N-terminal hotdog fold. The 307-residue stretch at 1261 to 1567 (HRLVKQEDTA…FRKMPRTTLH (307 aa)) folds into the PKS/mFAS DH domain. A product template (PT) domain region spans residues 1265 to 1566 (KQEDTAKEQH…RFRKMPRTTL (302 aa)). H1293 serves as the catalytic Proton acceptor; for dehydratase activity. The interval 1414–1567 (AGGRANRFQG…FRKMPRTTLH (154 aa)) is C-terminal hotdog fold. D1479 acts as the Proton donor; for dehydratase activity in catalysis. Residues 1578–1605 (NTKQVPHPTTNGSAIANGVNRNPSHNEP) are compositionally biased toward polar residues. A disordered region spans residues 1578-1622 (NTKQVPHPTTNGSAIANGVNRNPSHNEPSTPPVANGVNGTNGDQS). The region spanning 1622–1699 (SDRKSLYSVL…DAQRELRRLE (78 aa)) is the Carrier domain. Position 1659 is an O-(pantetheine 4'-phosphoryl)serine (S1659). The interval 1719-1913 (TRECNVVLMQ…DCTFVIWAKK (195 aa)) is thioesterase (TE) domain.

The protein operates within secondary metabolite biosynthesis; terpenoid biosynthesis. In terms of biological role, non-reducing polyketide synthase; part of the gene cluster that mediates the biosynthesis of the meroterpenoids nectripenoids A and B, as well as cochliquninone D and isocochliquninone E. The pathway probably begins with the HR-PKS ntnH that catalyzes two chain-extension steps to form a reduced triketide, which then primes the SAT domain in the NR-PKS ntnG to initiate three more cycles of extension to give a linear hexaketide corresponding to the polyketide part of nectripenoids. The FAD-dependent monooxygenase ntnJ then performs an oxidative decarboxylation at C11 of the ntnH/ntnG product, via an electrophilic aromatic hydroxylation with concomitant ipso-decarboxylation. The membrane-bound polyprenyl transferase ntnF then introduces a farnesyl group before the FAD-dependent monooxygenase ntnK functions as the first epoxidase on terminal C12'-C13' olefin, followed by a second epoxidation on C7'-C8' catalyzed by ntnA. The terpene cyclase/mutase ntnI then initiates the sequential tricyclic ring formation through protonation of the terminal epoxide and catalyzes the regioselective and stereoselective 6/6/6-tricyclic ring formation. The cytochrome P450 monooxygenase ntnM may then hydroxylate C1'. This chain is Non-reducing polyketide synthase ntnG, found in Nectria sp.